Consider the following 440-residue polypeptide: MVQQTNNAENTEALLAGESSDSGAGLELGIASSPTPGSTASTGGKADDPSWCKTPSGHIKRPMNAFMVWSQIERRKIMEQSPDMHNAEISKRLGKRWKLLKDSDKIPFIQEAERLRLKHMADYPDYKYRPRKKVKSGNAGAGSAATAKPGEKGDKVAGSSGHAGSSHAGGGAGGSSKPAPKKSCGPKVAGSSVGKPHAKLVPAGGSKAAASFSPEQAALLPLGEPTAVYKVRTPSAATPAASSSPSSALATPAKHPADKKVKRVYLFGSLGASASPVGGLGASADPSDPLGLYEDGGPGCSPDGRSLSGRSSAASSPAASRSPADHRGYASLRAASPAPSSAPSHASSSLSSSSSSSSGSSSSDDEFEDDLLDLNPSSNFESMSLGSFSSSSALDRDLDFNFEPGSGSHFEFPDYCTPEVSEMISGDWLESSISNLVFTY.

A compositionally biased stretch (polar residues) spans 1-10; sequence MVQQTNNAEN. A disordered region spans residues 1-58; it reads MVQQTNNAENTEALLAGESSDSGAGLELGIASSPTPGSTASTGGKADDPSWCKTPSGH. Positions 31–44 are enriched in low complexity; it reads ASSPTPGSTASTGG. Residues 59–127 constitute a DNA-binding region (HMG box); sequence IKRPMNAFMV…KHMADYPDYK (69 aa). Lys95 carries the N6-acetyllysine modification. Disordered regions lie at residues 128–211, 234–258, and 272–382; these read YRPR…AAAS, PSAATPAASSSPSSALATPAKHPAD, and ASAS…NFES. Composition is skewed to low complexity over residues 136–148, 157–166, 234–253, 304–322, and 330–362; these read SGNAGAGSAATAK, AGSSGHAGSS, PSAATPAASSSPSSALATPA, GRSLSGRSSAASSPAASRS, and ASLRAASPAPSSAPSHASSSLSSSSSSSSGSSS. Residues 363-372 show a composition bias toward acidic residues; the sequence is SDDEFEDDLL. Residues 373–382 show a composition bias toward low complexity; that stretch reads DLNPSSNFES. The short motif at 392 to 400 is the 9aaTAD element; the sequence is SALDRDLDF.

In terms of assembly, interacts with UBE2I. Interacts with HDAC1; interaction inhibits the transcriptional activator activity. Post-translationally, acetylation at Lys-95 by KAT5 promotes the transcription activator activity and is required during myoblast differentiation. Acetylation by KAT5 abolishes the interaction between SOX4 and HDAC1 and switches SOX4 into a transcriptional activator. Expressed in both gamma-delta T-cells and Cd4+ Cd8+ double-positive (DP) alpha-beta T-cells. Expressed in the ovaries and the thymus.

It localises to the nucleus. Functionally, transcriptional activator that binds with high affinity to the T-cell enhancer motif 5'-AACAAAG-3' motif. Required for IL17A-producing Vgamma2-positive gamma-delta T-cell maturation and development, via binding to regulator loci of RORC to modulate expression. Involved in skeletal myoblast differentiation by promoting gene expression of CALD1. This Mus musculus (Mouse) protein is Transcription factor SOX-4.